A 138-amino-acid chain; its full sequence is Aspartate 1-decarboxylase (138 aa).

Ser-25 (schiff-base intermediate with substrate; via pyruvic acid) is an active-site residue. Ser-25 carries the post-translational modification Pyruvic acid (Ser). Thr-57 contacts substrate. The Proton donor role is filled by Tyr-58. 73–75 (GAA) serves as a coordination point for substrate.

Belongs to the PanD family. Heterooctamer of four alpha and four beta subunits. Requires pyruvate as cofactor. Post-translationally, is synthesized initially as an inactive proenzyme, which is activated by self-cleavage at a specific serine bond to produce a beta-subunit with a hydroxyl group at its C-terminus and an alpha-subunit with a pyruvoyl group at its N-terminus.

It is found in the cytoplasm. It carries out the reaction L-aspartate + H(+) = beta-alanine + CO2. Its pathway is cofactor biosynthesis; (R)-pantothenate biosynthesis; beta-alanine from L-aspartate: step 1/1. In terms of biological role, catalyzes the pyruvoyl-dependent decarboxylation of aspartate to produce beta-alanine. The protein is Aspartate 1-decarboxylase of Renibacterium salmoninarum (strain ATCC 33209 / DSM 20767 / JCM 11484 / NBRC 15589 / NCIMB 2235).